Here is a 98-residue protein sequence, read N- to C-terminus: Large ribosomal subunit protein uL23 (98 aa).

It belongs to the universal ribosomal protein uL23 family. As to quaternary structure, part of the 50S ribosomal subunit. Contacts protein L29, and trigger factor when it is bound to the ribosome.

Functionally, one of the early assembly proteins it binds 23S rRNA. One of the proteins that surrounds the polypeptide exit tunnel on the outside of the ribosome. Forms the main docking site for trigger factor binding to the ribosome. The protein is Large ribosomal subunit protein uL23 of Streptococcus pneumoniae serotype 19F (strain G54).